The chain runs to 514 residues: MQQLNPSEISEIIKGRIDNLDVSSQARNEGTVVSVSDGIVRIHGLADVMYGEMIEFPGGVYGMALNLEQDSVGAVILGAYDTLAEGMSAKCTGRILEVPVGKELLGRVVDALGNPIDGKGPLGNTQTDAVEKVAPGVIWRKSVDQPVQTGYKSVDAMIPVGRGQRELIIGDRQIGKTAMAIDAIINQKNSGIFCVYVAVGQKRSTVANIVRKLEETGALANTIVVVASASESAALQFLAPYAGCTMGEFFRDRGEDALIVYDDLSKQAVAYRQISLLLRRPPGREAYPGDVFYLHSRLLERASRVSEEYVEKFTNGAVTGKTGSLTALPIIETQAGDVSAFVPTNVISITDGQIFLESAMFNSGIRPAVNAGVSVSRVGGAAQTKIIKKLSGGIRTALAQYRELAAFAQFASDLDEATRKQLEHGQRVTELMKQKQYAPMSIADMALSLYAAERGFLIDVEVSKIGSFEQALIAFFNRDHAELMAKINVKGDFNDEIDAGLKAGIEKFKATQTW.

170–177 contacts ATP; the sequence is GDRQIGKT.

This sequence belongs to the ATPase alpha/beta chains family. F-type ATPases have 2 components, CF(1) - the catalytic core - and CF(0) - the membrane proton channel. CF(1) has five subunits: alpha(3), beta(3), gamma(1), delta(1), epsilon(1). CF(0) has three main subunits: a(1), b(2) and c(9-12). The alpha and beta chains form an alternating ring which encloses part of the gamma chain. CF(1) is attached to CF(0) by a central stalk formed by the gamma and epsilon chains, while a peripheral stalk is formed by the delta and b chains.

The protein localises to the cell inner membrane. It catalyses the reaction ATP + H2O + 4 H(+)(in) = ADP + phosphate + 5 H(+)(out). Its function is as follows. Produces ATP from ADP in the presence of a proton gradient across the membrane. The alpha chain is a regulatory subunit. The polypeptide is ATP synthase subunit alpha (Pseudomonas putida (strain ATCC 700007 / DSM 6899 / JCM 31910 / BCRC 17059 / LMG 24140 / F1)).